Reading from the N-terminus, the 359-residue chain is 3-dehydroquinate synthase (359 aa).

Residues 71–76, 105–109, 129–130, Lys-142, and Lys-151 each bind NAD(+); these read DGEAYK, GVIGD, and TT. Positions 184, 247, and 264 each coordinate Zn(2+).

The protein belongs to the sugar phosphate cyclases superfamily. Dehydroquinate synthase family. Requires Co(2+) as cofactor. It depends on Zn(2+) as a cofactor. NAD(+) serves as cofactor.

It localises to the cytoplasm. It catalyses the reaction 7-phospho-2-dehydro-3-deoxy-D-arabino-heptonate = 3-dehydroquinate + phosphate. Its pathway is metabolic intermediate biosynthesis; chorismate biosynthesis; chorismate from D-erythrose 4-phosphate and phosphoenolpyruvate: step 2/7. Its function is as follows. Catalyzes the conversion of 3-deoxy-D-arabino-heptulosonate 7-phosphate (DAHP) to dehydroquinate (DHQ). The sequence is that of 3-dehydroquinate synthase from Burkholderia mallei (strain NCTC 10247).